We begin with the raw amino-acid sequence, 507 residues long: Photosystem II CP47 reaction center protein (507 aa).

The Cytoplasmic portion of the chain corresponds to 2 to 16; sequence GLPWYRVHTVVLNDP. A helical transmembrane segment spans residues 17–39; it reads GRLISVHLMHTALVAGWAGSMAL. The Lumenal, thylakoid portion of the chain corresponds to 40–94; that stretch reads YELAIFDSSDAVLNPMWRQGMFVLPFMARLGVTSSWNGWSVTGETGLDPGFWSFE. A helical membrane pass occupies residues 95–116; that stretch reads GVAAAHIVLSGLLFLAAVWHWV. Over 117-134 the chain is Cytoplasmic; that stretch reads FWDLELFVDPRTGESALD. A helical membrane pass occupies residues 135 to 159; the sequence is LPKMFGIHLFLSGLLCFGFGAFHLT. The Lumenal, thylakoid portion of the chain corresponds to 160–196; sequence GVWGPGMWVSDPYGLTGHVQPVAPEWGPAGFNPFNPG. The helical transmembrane segment at 197–218 threads the bilayer; it reads GVVAHHIAAGIVGIIAGLFHLT. Residues 219-233 lie on the Cytoplasmic side of the membrane; that stretch reads VRPPERLYKALRMGN. The chain crosses the membrane as a helical span at residues 234–255; it reads IETVLSSSIAAVFFAAFVVAGT. Residues 256-450 are Lumenal, thylakoid-facing; that stretch reads MWYGNATTPI…GVFRTSPRGW (195 aa). The helical transmembrane segment at 451-474 threads the bilayer; sequence FTFGHAVFALLFFFGHIWHGSRTL. Residues 475–507 lie on the Cytoplasmic side of the membrane; that stretch reads FRDVFAGVDPGLEEQVEFGVFAKVGDLSTRKEA.

Belongs to the PsbB/PsbC family. PsbB subfamily. PSII is composed of 1 copy each of membrane proteins PsbA, PsbB, PsbC, PsbD, PsbE, PsbF, PsbH, PsbI, PsbJ, PsbK, PsbL, PsbM, PsbT, PsbX, Psb30/Ycf12, peripheral proteins PsbO, CyanoQ (PsbQ), PsbU, PsbV and a large number of cofactors. It forms dimeric complexes. Contacts PsbQ. Binds multiple chlorophylls. PSII binds additional chlorophylls, carotenoids and specific lipids. serves as cofactor.

The protein resides in the cellular thylakoid membrane. Its function is as follows. One of the components of the core complex of photosystem II (PSII). It binds chlorophyll and helps catalyze the primary light-induced photochemical processes of PSII. PSII is a light-driven water:plastoquinone oxidoreductase, using light energy to abstract electrons from H(2)O, generating O(2) and a proton gradient subsequently used for ATP formation. The polypeptide is Photosystem II CP47 reaction center protein (Synechocystis sp. (strain ATCC 27184 / PCC 6803 / Kazusa)).